The following is a 422-amino-acid chain: Leucine-rich repeat protein 1 (422 aa).

6 LRR repeats span residues 184–207 (LKNLTKLDLSHNCIKKLPATIGDL), 209–230 (HLQELNLNDNQLETFSVPLCTS), 233–258 (QKSLHSLDLSKNKIKALPVQFCQFRE), 260–279 (TNLNLNDNELIHLPFKIGQL), 280–301 (TNLRFLSAARNKLRNLPSEFKM), and 304–327 (LEYLDLFGNTFEKPEVIPIIKLQV).

In terms of assembly, component of the probable ECS(LRR1) E3 ubiquitin-protein ligase complex which contains CUL2, RBX1, Elongin BC complex and LRR1. Interacts with CUL2, RBX1, ELOB and ELOC.

It is found in the nucleus. Its pathway is protein modification; protein ubiquitination. Functionally, substrate recognition subunit of an ECS (Elongin BC-CUL2/5-SOCS-box protein) E3 ubiquitin-protein ligase complex which mediates the ubiquitination and subsequent proteasomal degradation of target proteins. ECS(LRR1) ubiquitinates MCM7 and promotes CMG replisome disassembly by VCP and chromatin extraction during S-phase. May negatively regulate the 4-1BB-mediated signaling cascades which result in the activation of NK-kappaB and JNK1. This Mus musculus (Mouse) protein is Leucine-rich repeat protein 1.